The sequence spans 187 residues: MSYRRETRETLVVVELVPGAVAQVETPIPFLTHMVETFLFYAGLGGRVYAEEKRRLDDGHHVIEDVAIALGRALDQLIGDRSAVARYGWAAVPMDDAFALAAVDLGGRPYWVVKAKLPNVAIGGYPLPMFPHWVRSLASEARATIHIYARGRDPHHKVEAAHKALGLALRAAVSPASGVQSTKGVLK.

The protein belongs to the imidazoleglycerol-phosphate dehydratase family.

It is found in the cytoplasm. The enzyme catalyses D-erythro-1-(imidazol-4-yl)glycerol 3-phosphate = 3-(imidazol-4-yl)-2-oxopropyl phosphate + H2O. Its pathway is amino-acid biosynthesis; L-histidine biosynthesis; L-histidine from 5-phospho-alpha-D-ribose 1-diphosphate: step 6/9. This is Imidazoleglycerol-phosphate dehydratase from Pyrobaculum calidifontis (strain DSM 21063 / JCM 11548 / VA1).